A 1818-amino-acid chain; its full sequence is Unconventional myosin-Vb (1818 aa).

Residues 8–60 enclose the Myosin N-terminal SH3-like domain; the sequence is TRYTRVWIPDPDEVWRSAELTKDYKEGDKSLQLRLEDDTILEYPVDVQNNQVP. Residues 21–40 are requires for interaction with LIMA1; the sequence is VWRSAELTKDYKEGDKSLQL. In terms of domain architecture, Myosin motor spans 69–762; that stretch reads VGENDLTALS…QVAYLEKLRA (694 aa). Residue 163–170 coordinates ATP; sequence GESGAGKT. The actin-binding stretch occupies residues 641–663; it reads LNLLMETLNATTPHYVRCIKPND. IQ domains lie at 765 to 794, 788 to 817, 813 to 842, 836 to 865, 861 to 890, and 884 to 913; these read FREATIMIQKSVRGWLQRVKYRRLRAATLS, LRAATLSLQRFCRGYLARRLAEHLRRTRAA, RTRAAIVFQKQYRMLKARRAYRRVCRATVI, VCRATVIIQSFTRAMFVRRNYRQVLMEHKA, MEHKATIIQKYARGWMARKRFLRERDAAIV, and ERDAAIVIQCAFRRLKARQELKALKIEARS. 2 disordered regions span residues 1086 to 1120 and 1161 to 1188; these read LRDEQTPGHRKNPSNQSSLESDSNYPSISTSEIGD and QAQLEKGQQDSKKGQVEQQNNGLDVDQD. Polar residues predominate over residues 1098–1118; that stretch reads PSNQSSLESDSNYPSISTSEI. 2 coiled-coil regions span residues 1140 to 1261 and 1313 to 1415; these read MTVF…LILR and LEAQ…ALAQ. At S1416 the chain carries Phosphoserine. The Dilute domain occupies 1496 to 1773; that stretch reads SSTINGIKKV…IRTIQAQLQE (278 aa).

Belongs to the TRAFAC class myosin-kinesin ATPase superfamily. Myosin family. In terms of assembly, component of the CART complex, at least composed of ACTN4, HGS/HRS, MYO5B and TRIM3. Interacts with RAB11FIP2. Interacts with RAB11A and RAB8A. Found in a complex with CFTR and RAB11A. Interacts with NPC1L1. Interacts with LIMA1.

It is found in the cytoplasm. May be involved in vesicular trafficking via its association with the CART complex. The CART complex is necessary for efficient transferrin receptor recycling but not for EGFR degradation. Required in a complex with RAB11A and RAB11FIP2 for the transport of NPC1L1 to the plasma membrane. Together with RAB11A participates in CFTR trafficking to the plasma membrane and TF (transferrin) recycling in nonpolarized cells. Together with RAB11A and RAB8A participates in epithelial cell polarization. Together with RAB25 regulates transcytosis. Required for proper localization of bile salt export pump ABCB11 at the apical/canalicular plasma membrane of hepatocytes. The chain is Unconventional myosin-Vb (Myo5b) from Mus musculus (Mouse).